The primary structure comprises 120 residues: UPF0342 protein LAF_1331 (120 aa).

Belongs to the UPF0342 family.

In Limosilactobacillus fermentum (strain NBRC 3956 / LMG 18251) (Lactobacillus fermentum), this protein is UPF0342 protein LAF_1331.